The following is a 297-amino-acid chain: Mitochondrial nicotinamide adenine dinucleotide transporter SLC25A51 (297 aa).

Residues Met1–Pro11 show a composition bias toward basic and acidic residues. The tract at residues Met1–Asp20 is disordered. Solcar repeat units lie at residues Val28–Leu108, Pro116–His200, and Asn213–Val296. 6 helical membrane passes run Cys36–Phe56, Leu85–Leu105, Pro116–Phe135, Ile179–Glu199, Phe215–Val235, and Leu268–Thr289.

Belongs to the mitochondrial carrier (TC 2.A.29) family.

Its subcellular location is the mitochondrion inner membrane. The catalysed reaction is NAD(+)(in) = NAD(+)(out). In terms of biological role, mitochondrial membrane carrier protein that mediates the import of NAD(+) into mitochondria. Mitochondrial NAD(+) is required for glycolysis and mitochondrial respiration. Compared to SLC25A52, SLC25A51-mediated transport is essential for the import of NAD(+) in mitochondria. The transport mechanism, uniport or antiport, its electrogenicity and substrate selectivity, remain to be elucidated. The polypeptide is Mitochondrial nicotinamide adenine dinucleotide transporter SLC25A51 (Homo sapiens (Human)).